Reading from the N-terminus, the 411-residue chain is UPF0761 membrane protein PSPA7_4558 (411 aa).

Transmembrane regions (helical) follow at residues 36–56 (LFAV…IPAF), 92–112 (HLTW…LVTI), 132–152 (FLLY…GFAV), 174–194 (LLGL…YSAV), 207–229 (GGMF…VSLF), and 244–264 (IFLL…VLVC).

This sequence belongs to the UPF0761 family.

The protein resides in the cell inner membrane. The protein is UPF0761 membrane protein PSPA7_4558 of Pseudomonas paraeruginosa (strain DSM 24068 / PA7) (Pseudomonas aeruginosa (strain PA7)).